A 417-amino-acid chain; its full sequence is Serine hydroxymethyltransferase (417 aa).

(6S)-5,6,7,8-tetrahydrofolate-binding positions include leucine 112 and 116–118 (GHL). Lysine 221 is modified (N6-(pyridoxal phosphate)lysine). Glutamate 247 serves as a coordination point for (6S)-5,6,7,8-tetrahydrofolate.

This sequence belongs to the SHMT family. In terms of assembly, homodimer. Requires pyridoxal 5'-phosphate as cofactor.

It localises to the cytoplasm. The enzyme catalyses (6R)-5,10-methylene-5,6,7,8-tetrahydrofolate + glycine + H2O = (6S)-5,6,7,8-tetrahydrofolate + L-serine. Its pathway is one-carbon metabolism; tetrahydrofolate interconversion. The protein operates within amino-acid biosynthesis; glycine biosynthesis; glycine from L-serine: step 1/1. Its function is as follows. Catalyzes the reversible interconversion of serine and glycine with tetrahydrofolate (THF) serving as the one-carbon carrier. This reaction serves as the major source of one-carbon groups required for the biosynthesis of purines, thymidylate, methionine, and other important biomolecules. Also exhibits THF-independent aldolase activity toward beta-hydroxyamino acids, producing glycine and aldehydes, via a retro-aldol mechanism. This is Serine hydroxymethyltransferase from Borrelia recurrentis (strain A1).